We begin with the raw amino-acid sequence, 410 residues long: Platelet-activating factor acetylhydrolase IB subunit alpha (410 aa).

A required for self-association and interaction with PAFAH1B2 and PAFAH1B3 region spans residues 1–38 (MVLSQRQRDELNRAIADYLRSNGYEEAYSVFKKEAELD). The interval 1-66 (MVLSQRQRDE…SVIRLQKKVM (66 aa)) is interaction with NDE1. The interaction with NDEL1 stretch occupies residues 1–102 (MVLSQRQRDE…EWIPRPPEKY (102 aa)). A LisH domain is found at 7 to 39 (QRDELNRAIADYLRSNGYEEAYSVFKKEAELDM). N6-acetyllysine is present on Lys53. Residues 56–82 (TSVIRLQKKVMELESKLNEAKEEFTSG) are a coiled coil. An interaction with dynein and dynactin region spans residues 83-410 (GPLGQKRDPK…DQTVKVWECR (328 aa)). 7 WD repeats span residues 106-147 (GHRS…RTLK), 148-187 (GHTDSVQDISFDHSGKLLASCSADMTIKLWDFQGFECIRT), 190-229 (GHDHNVSSVAIMPNGDHIVSASRDKTIKMWEVQTGYCVKT), 232-271 (GHREWVRMVRPNQDGTLIASCSNDQTVRVWVVATKECKAE), 274-333 (EHEH…CLMT), 336-377 (GHDN…KTLN), and 379-410 (HEHFVTSLDFHKTAPYVVTGFVDQTVKVWECR). A Phosphoserine modification is found at Ser109. Positions 367-409 (YKNKRCMKTLNAHEHFVTSLDFHKTAPYVVTGFVDQTVKVWEC) are interaction with DCX. The tract at residues 388 to 410 (FHKTAPYVVTGFVDQTVKVWECR) is interaction with NDEL1.

This sequence belongs to the WD repeat LIS1/nudF family. Can self-associate. Component of the cytosolic PAF-AH (I) heterotetrameric enzyme, which is composed of PAFAH1B1 (beta), PAFAH1B2 (alpha2) and PAFAH1B3 (alpha1) subunits. The catalytic activity of the enzyme resides in the alpha1 (PAFAH1B3) and alpha2 (PAFAH1B2) subunits, whereas the beta subunit (PAFAH1B1) has regulatory activity. Trimer formation is not essential for the catalytic activity. Interacts with the catalytic dimer of PAF-AH (I) heterotetrameric enzyme: interacts with PAFAH1B2 homodimer (alpha2/alpha2 homodimer), PAFAH1B3 homodimer (alpha1/alpha1 homodimer) and PAFAH1B2-PAFAH1B3 heterodimer (alpha2/alpha1 heterodimer). Interacts with DCX, dynein, dynactin, IQGAP1, KATNB1, NDE1, NDEL1, NUDC and RSN. Interacts with DISC1, and this interaction is enhanced by NDEL1. Interacts with DAB1 when DAB1 is phosphorylated in response to RELN/reelin signaling. Interacts with INTS13. Interacts with DCDC1.

The protein resides in the cytoplasm. Its subcellular location is the cytoskeleton. It is found in the microtubule organizing center. The protein localises to the centrosome. It localises to the spindle. The protein resides in the nucleus membrane. Functionally, regulatory subunit (beta subunit) of the cytosolic type I platelet-activating factor (PAF) acetylhydrolase (PAF-AH (I)), an enzyme that catalyzes the hydrolyze of the acetyl group at the sn-2 position of PAF and its analogs and participates in PAF inactivation. Regulates the PAF-AH (I) activity in a catalytic dimer composition-dependent manner. Positively regulates the activity of the minus-end directed microtubule motor protein dynein. May enhance dynein-mediated microtubule sliding by targeting dynein to the microtubule plus end. Required for several dynein- and microtubule-dependent processes such as the maintenance of Golgi integrity, the peripheral transport of microtubule fragments and the coupling of the nucleus and centrosome. Required during brain development for the proliferation of neuronal precursors and the migration of newly formed neurons from the ventricular/subventricular zone toward the cortical plate. Neuronal migration involves a process called nucleokinesis, whereby migrating cells extend an anterior process into which the nucleus subsequently translocates. During nucleokinesis dynein at the nuclear surface may translocate the nucleus towards the centrosome by exerting force on centrosomal microtubules. Also required for proper activation of Rho GTPases and actin polymerization at the leading edge of locomoting cerebellar neurons and postmigratory hippocampal neurons in response to calcium influx triggered via NMDA receptors. May also play a role in other forms of cell locomotion including the migration of fibroblasts during wound healing. Required for dynein recruitment to microtubule plus ends and BICD2-bound cargos. May modulate the Reelin pathway through interaction of the PAF-AH (I) catalytic dimer with VLDLR. This is Platelet-activating factor acetylhydrolase IB subunit alpha from Pan troglodytes (Chimpanzee).